We begin with the raw amino-acid sequence, 331 residues long: MRCWSPCSLLVVIVIYCLSSHTSEAFDLAQACVESQRLSLLPICDTIFAVQQEGVQQSADDGMRSKRFIRFGRALSGDAFLRFGKNVPDLPFEDKRFLRFGRAAPQLDELLKQALQRVESLQKADETSVRRKRSTDAAPQNNAENPEQKNDSAKITKRYIDDVEDSDVKRFMRFGKRFMRFGRNPSDVGNKLTEKRFMRFGRDPEKRFMRFGKSDDKRFMRFGRNPSDAEDELEEDKRFMRFGRGGEDDEEEAEKRFMRFGRDPEKKFMRFGKSGEDKRFMRFGRNPDEQEADKRFMRFGRGGEDDEVSTEDKRFMRFGRSADKCKGCLEG.

The N-terminal stretch at 1-25 is a signal peptide; sequence MRCWSPCSLLVVIVIYCLSSHTSEA. A propeptide spanning residues 26 to 65 is cleaved from the precursor; the sequence is FDLAQACVESQRLSLLPICDTIFAVQQEGVQQSADDGMRS. 2 positions are modified to phenylalanine amide: Phe71 and Phe83. Residues 86-94 constitute a propeptide that is removed on maturation; sequence NVPDLPFED. Position 100 is a phenylalanine amide (Phe100). Positions 103–168 are excised as a propeptide; that stretch reads AAPQLDELLK…YIDDVEDSDV (66 aa). The disordered stretch occupies residues 122 to 158; it reads QKADETSVRRKRSTDAAPQNNAENPEQKNDSAKITKR. The segment covering 146 to 158 has biased composition (basic and acidic residues); it reads PEQKNDSAKITKR. Phenylalanine amide is present on residues Phe174 and Phe181. Residues 184 to 194 constitute a propeptide that is removed on maturation; it reads NPSDVGNKLTE. The residue at position 200 (Phe200) is a Phenylalanine amide. A propeptide spanning residues 203–205 is cleaved from the precursor; sequence DPE. The residue at position 211 (Phe211) is a Phenylalanine amide. Residues 214–216 constitute a propeptide that is removed on maturation; the sequence is SDD. Position 222 is a phenylalanine amide (Phe222). A propeptide spanning residues 225 to 236 is cleaved from the precursor; that stretch reads NPSDAEDELEED. Phe242 bears the Phenylalanine amide mark. The propeptide occupies 245–254; the sequence is GGEDDEEEAE. Position 260 is a phenylalanine amide (Phe260). Positions 263-265 are excised as a propeptide; it reads DPE. Phenylalanine amide is present on Phe271. A propeptide spanning residues 274–277 is cleaved from the precursor; the sequence is SGED. The span at 279–296 shows a compositional bias: basic and acidic residues; the sequence is RFMRFGRNPDEQEADKRF. Positions 279–310 are disordered; it reads RFMRFGRNPDEQEADKRFMRFGRGGEDDEVST. A Phenylalanine amide modification is found at Phe283. The propeptide occupies 286 to 293; that stretch reads NPDEQEAD. Phe299 is modified (phenylalanine amide). The propeptide occupies 302–312; sequence GGEDDEVSTED. Phe318 is modified (phenylalanine amide). A propeptide spanning residues 321-331 is cleaved from the precursor; it reads SADKCKGCLEG.

Belongs to the FARP (FMRFamide related peptide) family.

The protein resides in the secreted. Its function is as follows. Excitatory neurotransmitters that directly modulate chromatophore function by activating chromatophore expansion at the chromatophore neuromuscular junction. The sequence is that of FMRFamide-related neuropeptides from Doryteuthis opalescens (California market squid).